The chain runs to 354 residues: MEHFDVAIIGLGPAGSALARKLAGKMQVIALDKKHQHGTEGFSKPCGGLLAPDAQRSFIRDGLTLPVDVIANPQIFSVKTVDVAASLTRNYQRSYININRHAFDLWMKSLIPASVEVYHDSLCRKIWREDDKWHVIFRADGWEQHITARYLVGADGANSMVRRHLYPDHQIRKYVAIQQWFAEKHPVPFYSCIFDNAITDCYSWSISKDGYFIFGGAYPMKDGQTRFTTLKEKMSAFQFQFGKAVKSEKCTVLFPSRWQDFVCGKDNAFLIGEAAGFISASSLEGISYALDSADILRSVLLKQPEKLNTAYWRATRKLRLKLFGKIVKSRCLTAPALRKWIMRSGVAHIPQLKD.

It belongs to the CbrA family.

In Shigella sonnei (strain Ss046), this protein is Protein CbrA (cbrA).